Consider the following 543-residue polypeptide: Chaperonin GroEL (543 aa).

ATP contacts are provided by residues 29–32, 86–90, Gly-413, 476–478, and Asp-492; these read TLGP, DGTTT, and NAA.

Belongs to the chaperonin (HSP60) family. In terms of assembly, forms a cylinder of 14 subunits composed of two heptameric rings stacked back-to-back. Interacts with the co-chaperonin GroES.

The protein localises to the cytoplasm. The catalysed reaction is ATP + H2O + a folded polypeptide = ADP + phosphate + an unfolded polypeptide.. Functionally, together with its co-chaperonin GroES, plays an essential role in assisting protein folding. The GroEL-GroES system forms a nano-cage that allows encapsulation of the non-native substrate proteins and provides a physical environment optimized to promote and accelerate protein folding. In Streptococcus pyogenes serotype M49 (strain NZ131), this protein is Chaperonin GroEL.